The chain runs to 360 residues: Phosphoserine aminotransferase (360 aa).

Arginine 43 contributes to the L-glutamate binding site. Residues 77 to 78 (AS), tryptophan 103, threonine 152, aspartate 172, and glutamine 195 contribute to the pyridoxal 5'-phosphate site. Lysine 196 bears the N6-(pyridoxal phosphate)lysine mark. 237-238 (NT) provides a ligand contact to pyridoxal 5'-phosphate.

Belongs to the class-V pyridoxal-phosphate-dependent aminotransferase family. SerC subfamily. As to quaternary structure, homodimer. Pyridoxal 5'-phosphate serves as cofactor.

The protein resides in the cytoplasm. The catalysed reaction is O-phospho-L-serine + 2-oxoglutarate = 3-phosphooxypyruvate + L-glutamate. It carries out the reaction 4-(phosphooxy)-L-threonine + 2-oxoglutarate = (R)-3-hydroxy-2-oxo-4-phosphooxybutanoate + L-glutamate. Its pathway is amino-acid biosynthesis; L-serine biosynthesis; L-serine from 3-phospho-D-glycerate: step 2/3. The protein operates within cofactor biosynthesis; pyridoxine 5'-phosphate biosynthesis; pyridoxine 5'-phosphate from D-erythrose 4-phosphate: step 3/5. Functionally, catalyzes the reversible conversion of 3-phosphohydroxypyruvate to phosphoserine and of 3-hydroxy-2-oxo-4-phosphonooxybutanoate to phosphohydroxythreonine. This is Phosphoserine aminotransferase from Syntrophobacter fumaroxidans (strain DSM 10017 / MPOB).